Here is a 271-residue protein sequence, read N- to C-terminus: TIP41-like protein (271 aa).

At K106 the chain carries N6-acetyllysine. An interaction with PPP2CA region spans residues 173 to 271; the sequence is RVMPSSFFLL…PVDSESAPSE (99 aa). A phosphoserine mark is found at S265 and S270.

This sequence belongs to the TIP41 family. As to quaternary structure, interacts with PPP2CA. Interacts with PPP2CB, PPP4C and PPP6C. Interacts with IGBP1; the interaction is dependent on PPP2CA. Associates with a protein phosphatase 2A PP2A(C):IGBP1 complex. Interacts with PPP4C and PPP4R2.

Its subcellular location is the cytoplasm. Its function is as follows. May be a allosteric regulator of serine/threonine-protein phosphatase 2A (PP2A). Inhibits catalytic activity of the PP2A(D) core complex in vitro. The PP2A(C):TIPRL complex does not show phosphatase activity. Acts as a negative regulator of serine/threonine-protein phosphatase 4 probably by inhibiting the formation of the active PPP4C:PPP4R2 complex; the function is proposed to implicate it in DNA damage response by promoting H2AX phosphorylated on Ser-140 (gamma-H2AX). May play a role in the regulation of ATM/ATR signaling pathway controlling DNA replication and repair. The sequence is that of TIP41-like protein (Tiprl) from Rattus norvegicus (Rat).